Here is a 339-residue protein sequence, read N- to C-terminus: STEAP1 protein (339 aa).

Helical transmembrane passes span 71–91 and 119–139; these read WHLP…YTLL and PMVS…AAIV. Residues 118 to 265 form the Ferric oxidoreductase domain; it reads LPMVSITLLA…KLGIVSLLLG (148 aa). Glutamine 140 and arginine 161 together coordinate FAD. Helical transmembrane passes span 164–184 and 218–238; these read FGLL…SYPM and IYVS…VTSI. Position 175 (histidine 175) interacts with heme b. Positions 237 and 254 each coordinate FAD. A run of 2 helical transmembrane segments spans residues 258 to 278 and 291 to 311; these read GIVS…NKWI and FMIA…LFLP. Histidine 268 lines the heme b pocket.

This sequence belongs to the STEAP family. As to quaternary structure, homotrimer. The cofactor is FAD. Heme b is required as a cofactor. As to expression, ubiquitously expressed. Highly expressed in prostate tumors.

It is found in the endosome membrane. The protein resides in the cell membrane. Functionally, does not function as a metalloreductase due to the absence of binding sites for the electron-donating substrate NADPH. Promotes Fe(3+) reduction when fused to the NADPH-binding domain of STEAP4. This Homo sapiens (Human) protein is STEAP1 protein (STEAP1).